The chain runs to 184 residues: Acyl-homoserine-lactone synthase (184 aa).

Belongs to the autoinducer synthase family.

The enzyme catalyses a fatty acyl-[ACP] + S-adenosyl-L-methionine = an N-acyl-L-homoserine lactone + S-methyl-5'-thioadenosine + holo-[ACP] + H(+). Functionally, involved in the synthesis of the acyl-homoserine lactone (AHL) signal N-(3-hydroxydodecanoyl)-L-HSL (3-hydroxy-C(12)-HSL or OH-dDHL). Required for normal biofilm development. The sequence is that of Acyl-homoserine-lactone synthase from Acinetobacter baumannii.